Consider the following 208-residue polypeptide: Vacuolar ATPase assembly protein VMA12 (208 aa).

Residue Ala-2 is modified to N-acetylalanine. 2 helical membrane passes run 146-166 (LVITIFNFIVTVVAAFVCTYL) and 179-199 (VLAALIVASVVGLAELYVMVR).

As to quaternary structure, accessory component of the multisubunit proton-transporting vacuolar (V)-ATPase protein pump.

Its subcellular location is the cytoplasmic vesicle. The protein resides in the COPI-coated vesicle membrane. It is found in the endoplasmic reticulum-Golgi intermediate compartment membrane. The protein localises to the endoplasmic reticulum membrane. In terms of biological role, accessory component of the proton-transporting vacuolar (V)-ATPase protein pump involved in intracellular iron homeostasis. In aerobic conditions, required for intracellular iron homeostasis, thus triggering the activity of Fe(2+) prolyl hydroxylase (PHD) enzymes, and leading to HIF1A hydroxylation and subsequent proteasomal degradation. Necessary for endolysosomal acidification and lysosomal degradation. May be involved in Golgi homeostasis. Binds 20(S)-hydroxycholesterol (20(S)-OHC). The polypeptide is Vacuolar ATPase assembly protein VMA12 (Homo sapiens (Human)).